The following is a 726-amino-acid chain: Cyclic nucleotide-gated ion channel 2 (726 aa).

At methionine 1–alanine 127 the chain is on the cytoplasmic side. Positions isoleucine 26–glutamate 46 are disordered. Over residues glycine 36–aspartate 45 the composition is skewed to low complexity. A helical transmembrane segment spans residues leucine 128 to isoleucine 148. At glycine 149 to alanine 162 the chain is on the extracellular side. A helical membrane pass occupies residues phenylalanine 163 to tryptophan 183. Residues leucine 184 to threonine 219 lie on the Cytoplasmic side of the membrane. Residues glycine 220–valine 240 traverse the membrane as a helical segment. At proline 241–threonine 254 the chain is on the extracellular side. Residues isoleucine 255 to methionine 275 form a helical membrane-spanning segment. Topologically, residues arginine 276 to threonine 282 are cytoplasmic. Residues glycine 283 to alanine 303 traverse the membrane as a helical segment. The Extracellular portion of the chain corresponds to serine 304–tryptophan 424. A helical membrane pass occupies residues leucine 425–isoleucine 445. The Cytoplasmic segment spans residues glycine 446 to glutamate 726. Residues leucine 531–tyrosine 661 and aspartate 600 contribute to the a nucleoside 3',5'-cyclic phosphate site. A calmodulin-binding region spans residues phenylalanine 645–tyrosine 661. An IQ domain is found at arginine 666–proline 695.

It belongs to the cyclic nucleotide-gated cation channel (TC 1.A.1.5) family. As to quaternary structure, homotetramer or heterotetramer (Potential). Binds calmodulin-1/4 with a higher affinity than calmodulin-2/3/5. In terms of tissue distribution, expressed in the whole plant but only weakly in roots. Strongly expressed in the expanded cotyledons of 14-day-old seedlings and detected later in leaves after the transition to flowering. Also detected in flowers during organ senescence and in the dehiscence zone of siliques.

Its subcellular location is the cell membrane. Its function is as follows. Acts as a cyclic nucleotide-gated ion channel. Permeable to potassium and calcium in a cyclic nucleotide-dependent fashion (cAMP or cGMP). Could also transport lithium, cesium and rubium and displays a strong selectivity against sodium. Seems to directly participate in pathogen-induced calcium influx. May function in homeostasis, re-establishing ionic balance after defense action and/or other stimuli. Could mediate the initiation of the developmentally regulated cell death programs. The sequence is that of Cyclic nucleotide-gated ion channel 2 (CNGC2) from Arabidopsis thaliana (Mouse-ear cress).